A 276-amino-acid polypeptide reads, in one-letter code: Undecaprenyl-diphosphatase 2 (276 aa).

Transmembrane regions (helical) follow at residues 3 to 23, 48 to 68, 92 to 112, 119 to 139, 196 to 216, 225 to 245, and 255 to 275; these read IWDI…EYAP, AANT…AFVF, LSIA…FLFE, LFSV…MLAA, ADFT…LSLI, DLLP…LFVV, and IKLV…FILF.

Belongs to the UppP family.

It localises to the cell membrane. It carries out the reaction di-trans,octa-cis-undecaprenyl diphosphate + H2O = di-trans,octa-cis-undecaprenyl phosphate + phosphate + H(+). In terms of biological role, catalyzes the dephosphorylation of undecaprenyl diphosphate (UPP). Confers resistance to bacitracin. The chain is Undecaprenyl-diphosphatase 2 from Bacillus licheniformis (strain ATCC 14580 / DSM 13 / JCM 2505 / CCUG 7422 / NBRC 12200 / NCIMB 9375 / NCTC 10341 / NRRL NRS-1264 / Gibson 46).